We begin with the raw amino-acid sequence, 310 residues long: Protein A56 (310 aa).

The first 16 residues, 1–16 (MKQLSIVILLLSIVYT), serve as a signal peptide directing secretion. The Virion surface segment spans residues 17–275 (TKPHPTQISK…TKYTTSDFIE (259 aa)). Residues 19-121 (PHPTQISKKL…TNDTDKIDYE (103 aa)) enclose the Ig-like V-type domain. Residues C36 and C105 are joined by a disulfide bond. N-linked (GlcNAc...) asparagine; by host glycosylation is found at N39, N113, and N133. Residues 153–195 (HTEEQHDSDTTICTSESTTQISETSESTTSSQISETSESTSYG) form a disordered region. A compositionally biased stretch (low complexity) spans 162–193 (TTICTSESTTQISETSESTTSSQISETSESTS). Residue N203 is glycosylated (N-linked (GlcNAc...) asparagine; by host). Residues 276–300 (IFGIVSLILLLAVAIFCIIYYFCSG) form a helical membrane-spanning segment. The Intravirion portion of the chain corresponds to 301-310 (RSRKQETNIL).

Heterodimerizes with K2. The heterodimer A56/K2 interacts with components of the entry fusion complex A16 and G9. Interacts with K2 protein. Heterodimer with C3/VPC protein; disulfide-linked. Post-translationally, glycosylated; contains phosphate and sulfate-substituted glycans. O-glycosylation is required for hemagglutination and hemadsorption activities of infected cell membranes.

It is found in the virion membrane. The protein localises to the host membrane. Its function is as follows. Prevents cell to cell fusion by interacting with and directing the viral K2 protein on the host plasma membrane. The A56-K2 complex associates with components of the entry fusion complex (EFC) presumably to avoid superinfection and syncytium formation. Via its interaction with C3/VCP protein, protects the infected cell and probably also the extracellular enveloped virus from complement attack. In Raccoon poxvirus (RCN), this protein is Protein A56 (HA).